We begin with the raw amino-acid sequence, 139 residues long: Putative pre-16S rRNA nuclease (139 aa).

The protein belongs to the YqgF nuclease family.

It localises to the cytoplasm. Its function is as follows. Could be a nuclease involved in processing of the 5'-end of pre-16S rRNA. The protein is Putative pre-16S rRNA nuclease of Streptococcus pneumoniae (strain JJA).